Consider the following 122-residue polypeptide: uncharacterized protein (122 aa).

The disordered stretch occupies residues 97-122 (TSRNGFSNPNKDGKKNDDDNNSSSKS).

This is an uncharacterized protein from Mycoplasma genitalium (strain ATCC 33530 / DSM 19775 / NCTC 10195 / G37) (Mycoplasmoides genitalium).